The primary structure comprises 474 residues: Serine/threonine-protein kinase VRK3 (474 aa).

Over residues His41–Thr58 the composition is skewed to polar residues. Residues His41 to Leu152 form a disordered region. A Nuclear localization signal motif is present at residues Lys49 to Lys64. Residues Ser54, Ser55, Ser59, Ser82, Ser83, and Ser90 each carry the phosphoserine modification. Residues Thr88–Arg101 are compositionally biased toward low complexity. The span at Ser107–Leu149 shows a compositional bias: polar residues. A Phosphoserine; by CDK5 modification is found at Ser108. Phosphoserine occurs at positions 115 and 122. The region spanning Trp166 to Leu457 is the Protein kinase domain.

It belongs to the protein kinase superfamily. CK1 Ser/Thr protein kinase family. VRK subfamily. As to quaternary structure, interacts with DUSP3. Interacts with RAN. Interacts with HSP70/HSPA1A. Phosphorylated at Ser-108 by CDK5; leading to protection of the cell against H2O2-induced apoptosis. Post-translationally, ubiquitinated by RNF144A.

The protein localises to the nucleus. Its subcellular location is the cytoplasm. It carries out the reaction L-seryl-[protein] + ATP = O-phospho-L-seryl-[protein] + ADP + H(+). Plays a role in the regulation of the cell cycle by phosphorylating the nuclear envelope protein barrier-to-autointegration factor/BAF that is required for disassembly and reassembly, respectively, of the nuclear envelope during mitosis. Under normal physiological conditions, negatively regulates ERK activity along with VHR/DUSP3 phosphatase in the nucleus, causing timely and transient action of ERK. Stress conditions activate CDK5 which phosphorylates VRK3 to increase VHR phosphatase activity and suppress prolonged ERK activation that causes cell death. For example, upon glutamate induction, promotes nuclear localization of HSP70/HSPA1A to inhibit ERK activation via VHR/DUSP3 phosphatase. In Homo sapiens (Human), this protein is Serine/threonine-protein kinase VRK3 (VRK3).